Here is a 319-residue protein sequence, read N- to C-terminus: Beta-ketoacyl-[acyl-carrier-protein] synthase III (319 aa).

Catalysis depends on residues Cys115 and His246. The tract at residues 247-251 (QANLR) is ACP-binding. The active site involves Asn276.

This sequence belongs to the thiolase-like superfamily. FabH family. In terms of assembly, homodimer.

It localises to the cytoplasm. The enzyme catalyses malonyl-[ACP] + acetyl-CoA + H(+) = 3-oxobutanoyl-[ACP] + CO2 + CoA. Its pathway is lipid metabolism; fatty acid biosynthesis. Functionally, catalyzes the condensation reaction of fatty acid synthesis by the addition to an acyl acceptor of two carbons from malonyl-ACP. Catalyzes the first condensation reaction which initiates fatty acid synthesis and may therefore play a role in governing the total rate of fatty acid production. Possesses both acetoacetyl-ACP synthase and acetyl transacylase activities. Its substrate specificity determines the biosynthesis of branched-chain and/or straight-chain of fatty acids. The sequence is that of Beta-ketoacyl-[acyl-carrier-protein] synthase III from Coxiella burnetii (strain CbuK_Q154) (Coxiella burnetii (strain Q154)).